The primary structure comprises 432 residues: CinA-like protein (432 aa).

Belongs to the CinA family.

In Colwellia psychrerythraea (strain 34H / ATCC BAA-681) (Vibrio psychroerythus), this protein is CinA-like protein.